We begin with the raw amino-acid sequence, 456 residues long: UDP-N-acetylmuramate--L-alanine ligase (456 aa).

An ATP-binding site is contributed by G112–T118.

This sequence belongs to the MurCDEF family.

The protein resides in the cytoplasm. It carries out the reaction UDP-N-acetyl-alpha-D-muramate + L-alanine + ATP = UDP-N-acetyl-alpha-D-muramoyl-L-alanine + ADP + phosphate + H(+). It participates in cell wall biogenesis; peptidoglycan biosynthesis. Functionally, cell wall formation. The protein is UDP-N-acetylmuramate--L-alanine ligase of Desulfatibacillum aliphaticivorans.